A 300-amino-acid polypeptide reads, in one-letter code: Cation-efflux pump FieF (300 aa).

Helical transmembrane passes span 12 to 32 (AAIAATVMASLLLLIKIFAWW), 39 to 59 (ILAALVDSLVDIAASLTNLLV), 82 to 102 (AALAQSMFISGSALFLFLTGI), and 114 to 134 (PGVGIVVTLIALVCTIILVTF). Positions 45 and 49 each coordinate Zn(2+). Positions 153 and 157 each coordinate Zn(2+). A helical membrane pass occupies residues 164-184 (ILVALGLAWYGWHRADALFAL).

Belongs to the cation diffusion facilitator (CDF) transporter (TC 2.A.4) family. FieF subfamily. As to quaternary structure, homodimer.

The protein resides in the cell inner membrane. The catalysed reaction is Zn(2+)(in) + H(+)(out) = Zn(2+)(out) + H(+)(in). It catalyses the reaction Cd(2+)(in) + H(+)(out) = Cd(2+)(out) + H(+)(in). The enzyme catalyses Fe(2+)(in) + H(+)(out) = Fe(2+)(out) + H(+)(in). Functionally, divalent metal cation transporter which exports Zn(2+), Cd(2+) and possibly Fe(2+). May be involved in zinc and iron detoxification by efflux. The chain is Cation-efflux pump FieF from Citrobacter koseri (strain ATCC BAA-895 / CDC 4225-83 / SGSC4696).